We begin with the raw amino-acid sequence, 114 residues long: Probable 4-amino-4-deoxy-L-arabinose-phosphoundecaprenol flippase subunit ArnE (114 aa).

A run of 3 helical transmembrane segments spans residues 41–61, 64–84, and 94–114; these read PWLI…IYLL, LPLS…LIGS, and YHNW…GGLL. The EamA domain occupies 53-112; that stretch reads GMLLWIYLLQRLPLSMAYPMLSINLVLVLIGSRLFFHEQISYHNWLGAGAIIIGALLLGG.

This sequence belongs to the ArnE family. As to quaternary structure, heterodimer of ArnE and ArnF.

It is found in the cell inner membrane. It participates in bacterial outer membrane biogenesis; lipopolysaccharide biosynthesis. Translocates 4-amino-4-deoxy-L-arabinose-phosphoundecaprenol (alpha-L-Ara4N-phosphoundecaprenol) from the cytoplasmic to the periplasmic side of the inner membrane. The sequence is that of Probable 4-amino-4-deoxy-L-arabinose-phosphoundecaprenol flippase subunit ArnE from Aeromonas salmonicida (strain A449).